The primary structure comprises 85 residues: MSSLMISTAMKGKAPYRQVRDGYIAQPHNCAYHCLKISSGCDTLCKENGATSGHCGHKSGHGSACWCKDLPDKVGIIVHGEKCHR.

A signal peptide spans 1 to 18 (MSSLMISTAMKGKAPYRQ). One can recognise an LCN-type CS-alpha/beta domain in the interval 20-84 (RDGYIAQPHN…GIIVHGEKCH (65 aa)). 4 cysteine pairs are disulfide-bonded: Cys-30–Cys-83, Cys-34–Cys-55, Cys-41–Cys-65, and Cys-45–Cys-67.

It belongs to the long (4 C-C) scorpion toxin superfamily. Sodium channel inhibitor family. Alpha subfamily. Expressed by the venom gland.

It localises to the secreted. Its function is as follows. Alpha toxins bind voltage-independently at site-3 of sodium channels (Nav) and inhibit the inactivation of the activated channels, thereby blocking neuronal transmission. This toxin is active only on insects. This is Alpha-insect toxin Bot14 from Buthus occitanus tunetanus (Common European scorpion).